The primary structure comprises 149 residues: MTDLSAQKRLAADVLDVGKNRVWFNPERQGDIADAITREDVRELVDEGAIQAKDKKGNSRGRARERQKKRAYGHQKGAGSRKGKAGARQNSKEDWESRIRAQRTKLRELRDEGTLSSSQYRDLYDKAGGGEFDSVADLERYIDANHGDA.

The segment at 45 to 130 is disordered; that stretch reads VDEGAIQAKD…RDLYDKAGGG (86 aa). Over residues 58 to 85 the composition is skewed to basic residues; the sequence is NSRGRARERQKKRAYGHQKGAGSRKGKA. Residues 90 to 113 are compositionally biased toward basic and acidic residues; sequence NSKEDWESRIRAQRTKLRELRDEG.

This sequence belongs to the eukaryotic ribosomal protein eL19 family. Part of the 50S ribosomal subunit.

Its function is as follows. Binds to the 23S rRNA. Located at the polypeptide exit tunnel on the outside of the subunit. This is Large ribosomal subunit protein eL19 from Haloarcula marismortui (strain ATCC 43049 / DSM 3752 / JCM 8966 / VKM B-1809) (Halobacterium marismortui).